The sequence spans 187 residues: Holliday junction branch migration complex subunit RuvA (187 aa).

The segment at 1–64 (MIEYVRGIIE…EDGFQIFGFK (64 aa)) is domain I. Residues 65–136 (TKEELDLFEK…ELKDKLPKEI (72 aa)) are domain II. The flexible linker stretch occupies residues 136–139 (IVFE). The domain III stretch occupies residues 140-187 (GDNNFSNEALEALLALGYTKSEAIYALADITCDSVEDAVKQALKKLMK).

It belongs to the RuvA family. Homotetramer. Forms an RuvA(8)-RuvB(12)-Holliday junction (HJ) complex. HJ DNA is sandwiched between 2 RuvA tetramers; dsDNA enters through RuvA and exits via RuvB. An RuvB hexamer assembles on each DNA strand where it exits the tetramer. Each RuvB hexamer is contacted by two RuvA subunits (via domain III) on 2 adjacent RuvB subunits; this complex drives branch migration. In the full resolvosome a probable DNA-RuvA(4)-RuvB(12)-RuvC(2) complex forms which resolves the HJ.

It localises to the cytoplasm. Its function is as follows. The RuvA-RuvB-RuvC complex processes Holliday junction (HJ) DNA during genetic recombination and DNA repair, while the RuvA-RuvB complex plays an important role in the rescue of blocked DNA replication forks via replication fork reversal (RFR). RuvA specifically binds to HJ cruciform DNA, conferring on it an open structure. The RuvB hexamer acts as an ATP-dependent pump, pulling dsDNA into and through the RuvAB complex. HJ branch migration allows RuvC to scan DNA until it finds its consensus sequence, where it cleaves and resolves the cruciform DNA. The sequence is that of Holliday junction branch migration complex subunit RuvA from Thermoanaerobacter pseudethanolicus (strain ATCC 33223 / 39E) (Clostridium thermohydrosulfuricum).